Consider the following 395-residue polypeptide: Lipid-A-disaccharide synthase (395 aa).

The protein belongs to the LpxB family.

It catalyses the reaction a lipid X + a UDP-2-N,3-O-bis[(3R)-3-hydroxyacyl]-alpha-D-glucosamine = a lipid A disaccharide + UDP + H(+). Its pathway is bacterial outer membrane biogenesis; LPS lipid A biosynthesis. Functionally, condensation of UDP-2,3-diacylglucosamine and 2,3-diacylglucosamine-1-phosphate to form lipid A disaccharide, a precursor of lipid A, a phosphorylated glycolipid that anchors the lipopolysaccharide to the outer membrane of the cell. In Bordetella avium (strain 197N), this protein is Lipid-A-disaccharide synthase.